We begin with the raw amino-acid sequence, 314 residues long: DNA-directed RNA polymerase subunit alpha (314 aa).

An alpha N-terminal domain (alpha-NTD) region spans residues 1–228 (MIEIEKPKIE…EHLNIFVGLT (228 aa)). The interval 245–314 (KEKVLEMTIE…ELGLGLRKDD (70 aa)) is alpha C-terminal domain (alpha-CTD).

It belongs to the RNA polymerase alpha chain family. As to quaternary structure, homodimer. The RNAP catalytic core consists of 2 alpha, 1 beta, 1 beta' and 1 omega subunit. When a sigma factor is associated with the core the holoenzyme is formed, which can initiate transcription.

It catalyses the reaction RNA(n) + a ribonucleoside 5'-triphosphate = RNA(n+1) + diphosphate. Functionally, DNA-dependent RNA polymerase catalyzes the transcription of DNA into RNA using the four ribonucleoside triphosphates as substrates. In Bacillus licheniformis (strain ATCC 14580 / DSM 13 / JCM 2505 / CCUG 7422 / NBRC 12200 / NCIMB 9375 / NCTC 10341 / NRRL NRS-1264 / Gibson 46), this protein is DNA-directed RNA polymerase subunit alpha.